Reading from the N-terminus, the 92-residue chain is Small ribosomal subunit protein uS19 (92 aa).

This sequence belongs to the universal ribosomal protein uS19 family.

Protein S19 forms a complex with S13 that binds strongly to the 16S ribosomal RNA. This is Small ribosomal subunit protein uS19 from Picosynechococcus sp. (strain ATCC 27264 / PCC 7002 / PR-6) (Agmenellum quadruplicatum).